We begin with the raw amino-acid sequence, 635 residues long: MALQLDLPTLHDLRVVLNADFLAALAALLLLAVILVPLCSYISLYAWSAILAFKLRSPPANWEKSIVKGVQANGTSTLFGFGFWQAAAVRRQLILQSNDPSYYSVTHVSRRSEIAISPEDRNTEFRNRAQDSGAPRRVIYGFFHPYANAGGGGERVLWAAVKDTLMYDDNIICAIYCGEQDLPTRTSPSTVLDAAVSNFHVTELADKELRKRIVFIGMRGRRLVDPKTWPRFTLMMQAAGSVWMAWHGISTLVPDVFVDTMGYPFAYPLVSWVTHVPVAAYVHYPVISKDMLATVSLKQSPVRAALAVAKLVYWRVFALTYTFAGSYCSVVMTNSSWTNNHMQHMWWYNHKAEHIKIVYPPCGTQALSEIAMSEETSARSPNIVYIAQFRPEKRHDIVLREFNKFYKEYTEKYPNQPAPHLTFVGTVRNDDDKSRVYLLRLQARDLVNPDSVSFVLDAPFDKVRDILRTASMGVNAMWNEHFGIVVVEYMSAGLIPVVHNSGGPKCDIVVPYEGQSTGNSGTLSAMPSSTSIRSHYEAVPPGPTGFHFNCPGSDPTTDSGPSYDGEPIGTLAETLMRAFELSESDTHNMRARARESVKKRFSNEQFGSHWQVRMRILEKLEQIRRGHRLTRGDFD.

Residues 1–21 (MALQLDLPTLHDLRVVLNADF) are Lumenal-facing. A helical transmembrane segment spans residues 22-42 (LAALAALLLLAVILVPLCSYI). Residues 43–231 (SLYAWSAILA…RLVDPKTWPR (189 aa)) lie on the Cytoplasmic side of the membrane. Residues 232–252 (FTLMMQAAGSVWMAWHGISTL) constitute an intramembrane region (helical). Topologically, residues 253-481 (VPDVFVDTMG…MGVNAMWNEH (229 aa)) are cytoplasmic. The segment at residues 482–502 (FGIVVVEYMSAGLIPVVHNSG) is an intramembrane region (helical). At 503-635 (GPKCDIVVPY…GHRLTRGDFD (133 aa)) the chain is on the cytoplasmic side.

It belongs to the glycosyltransferase group 1 family.

It localises to the endoplasmic reticulum membrane. It catalyses the reaction an alpha-D-Man-(1-&gt;3)-[alpha-D-Man-(1-&gt;6)]-beta-D-Man-(1-&gt;4)-beta-D-GlcNAc-(1-&gt;4)-alpha-D-GlcNAc-diphospho-di-trans,poly-cis-dolichol + 2 GDP-alpha-D-mannose = an alpha-D-Man-(1-&gt;2)-alpha-D-Man-(1-&gt;2)-alpha-D-Man-(1-&gt;3)-[alpha-D-Man-(1-&gt;6)]-beta-D-Man-(1-&gt;4)-beta-D-GlcNAc-(1-&gt;4)-alpha-D-GlcNAc-diphospho-di-trans,poly-cis-dolichol + 2 GDP + 2 H(+). The protein operates within protein modification; protein glycosylation. In terms of biological role, GDP-Man:Man(3)GlcNAc(2)-PP-Dol alpha-1,2-mannosyltransferase that operates in the biosynthetic pathway of dolichol-linked oligosaccharides, the glycan precursors employed in protein asparagine (N)-glycosylation. The assembly of dolichol-linked oligosaccharides begins on the cytosolic side of the endoplasmic reticulum membrane and finishes in its lumen. The sequential addition of sugars to dolichol pyrophosphate produces dolichol-linked oligosaccharides containing fourteen sugars, including two GlcNAcs, nine mannoses and three glucoses. Once assembled, the oligosaccharide is transferred from the lipid to nascent proteins by oligosaccharyltransferases. Catalyzes, on the cytoplasmic face of the endoplasmic reticulum, the addition of the fourth and fifth mannose residues to the dolichol-linked oligosaccharide chain, to produce Man(5)GlcNAc(2)-PP-dolichol core oligosaccharide. The protein is GDP-Man:Man(3)GlcNAc(2)-PP-Dol alpha-1,2-mannosyltransferase (ALG11) of Yarrowia lipolytica (strain CLIB 122 / E 150) (Yeast).